We begin with the raw amino-acid sequence, 196 residues long: Oplophorus-luciferin 2-monooxygenase catalytic subunit (196 aa).

An N-terminal signal peptide occupies residues 1-27 (MAYSTLFIIALTAVVTQASSTQKSNLT).

In terms of assembly, heterotetramer of a catalytic 19 kDa and a non-catalytic 35 kDa subunit.

The protein localises to the secreted. The catalysed reaction is coelenterazine + O2 = coelenteramide + hnu + CO2. With respect to regulation, inhibited by micromolar Cu(2+). Its function is as follows. Catalytic subunit of oplophorus-luciferin 2-monooxygenase. Oxidoreductase that converts coelenterazine (the oplophorus luciferin) to coelenteramide under emission of blue light with a maximum at 454 nm. Is also active with bisdeoxycoelenterazine. This chain is Oplophorus-luciferin 2-monooxygenase catalytic subunit, found in Oplophorus gracilirostris (Luminous shrimp).